Consider the following 653-residue polypeptide: DUF21 domain-containing protein At1g55930, chloroplastic (653 aa).

The transit peptide at 1–72 directs the protein to the chloroplast; that stretch reads MELDLSVLGR…DFSHRCQFVV (72 aa). The next 5 membrane-spanning stretches (helical) occupy residues 103 to 123, 157 to 177, 208 to 228, 234 to 254, and 280 to 300; these read GIVL…KVLA, GLIL…ETSI, FLTT…ALVT, IFGE…ILLL, and WLSL…MGIL. Residues 149-335 form the CNNM transmembrane domain; sequence VLKVLREQGL…ELSGAIEEEE (187 aa). 2 consecutive CBS domains span residues 354-415 and 421-479; these read MTPL…LLES and MAHK…IFDE.

It is found in the plastid. The protein localises to the chloroplast membrane. The protein is DUF21 domain-containing protein At1g55930, chloroplastic (CBSDUFCH2) of Arabidopsis thaliana (Mouse-ear cress).